Reading from the N-terminus, the 396-residue chain is MIISAASDYRAAAQRILPPFLFHYMDGGAYSEYTLRRNVEDLSEVALRQRILKNMSDLSLETTLFNEKLSMPVALAPVGLCGMYARRGEVQAAKAADAHGIPFTLSTVSVCPIEEVAPAIKRPMWFQLYVLRDRGFMRNALERAKAAGCSTLVFTVDMPTPGARYRDAHSGMSGPNAAMRRYLQAVTHPQWAWDVGLNGRPHDLGNISAYLGKPTGLEDYIGWLGNNFDPSISWKDLEWIRDFWDGPMVIKGILDPEDARDAVRFGADGIVVSNHGGRQLDGVLSSARALPAIADAVKGDIAILADSGIRNGLDVVRMIALGADTVLLGRAFLYALATAGQAGVANLLNLIEKEMKVAMTLTGAKSISEITQDSLVQELSKAPAAALAPMAKGNAA.

The region spanning Met1–Ser380 is the FMN hydroxy acid dehydrogenase domain. Tyr24 contributes to the substrate binding site. The FMN site is built by Ser106 and Gln127. Tyr129 contacts substrate. Thr155 serves as a coordination point for FMN. A substrate-binding site is contributed by Arg164. An FMN-binding site is contributed by Lys251. The active-site Proton acceptor is His275. Arg278 contacts substrate. Asp306 to Arg330 serves as a coordination point for FMN.

It belongs to the FMN-dependent alpha-hydroxy acid dehydrogenase family. Requires FMN as cofactor.

Its subcellular location is the cell inner membrane. The catalysed reaction is (S)-lactate + A = pyruvate + AH2. Catalyzes the conversion of L-lactate to pyruvate. Is coupled to the respiratory chain. In Escherichia coli (strain SMS-3-5 / SECEC), this protein is L-lactate dehydrogenase.